Here is a 354-residue protein sequence, read N- to C-terminus: Inactive ADP-ribosyltransferase ARH2 (354 aa).

Serine 27 carries the phosphoserine modification.

It belongs to the ADP-ribosylglycohydrolase family.

It is found in the cytoplasm. The protein resides in the myofibril. The protein localises to the sarcomere. Required for myofibril assembly and outgrowth of the cardiac chambers in the developing heart. Appears to be catalytically inactive, showing no activity against O-acetyl-ADP-ribose. In Pongo abelii (Sumatran orangutan), this protein is Inactive ADP-ribosyltransferase ARH2 (ADPRHL1).